A 110-amino-acid chain; its full sequence is Flagellar hook-basal body complex protein FliE (110 aa).

The protein belongs to the FliE family.

It localises to the bacterial flagellum basal body. The protein is Flagellar hook-basal body complex protein FliE of Bordetella petrii (strain ATCC BAA-461 / DSM 12804 / CCUG 43448).